The chain runs to 445 residues: ATP-dependent protease ATPase subunit HslU (445 aa).

ATP is bound by residues Ile17, Gly59–Glu64, Asp254, Glu319, and Arg391.

This sequence belongs to the ClpX chaperone family. HslU subfamily. A double ring-shaped homohexamer of HslV is capped on each side by a ring-shaped HslU homohexamer. The assembly of the HslU/HslV complex is dependent on binding of ATP.

Its subcellular location is the cytoplasm. Its function is as follows. ATPase subunit of a proteasome-like degradation complex; this subunit has chaperone activity. The binding of ATP and its subsequent hydrolysis by HslU are essential for unfolding of protein substrates subsequently hydrolyzed by HslV. HslU recognizes the N-terminal part of its protein substrates and unfolds these before they are guided to HslV for hydrolysis. The polypeptide is ATP-dependent protease ATPase subunit HslU (Pseudomonas fluorescens (strain SBW25)).